The chain runs to 434 residues: Ribonuclease T2-like (434 aa).

An N-terminal signal peptide occupies residues 1–18 (MLLKNLHSLLQLPIFSNG). 5 disulfide bridges follow: C27–C46, C35–C94, C45–C171, C102–C163, and C241–C277. N37 and N70 each carry an N-linked (GlcNAc...) asparagine glycan. H87 is an active-site residue. N103 and N123 each carry an N-linked (GlcNAc...) asparagine glycan. Active-site residues include E156 and H160.

This sequence belongs to the RNase T2 family. Post-translationally, N-glycosylated.

Its subcellular location is the vacuole lumen. It is found in the cytoplasm. It catalyses the reaction a ribonucleotidyl-ribonucleotide-RNA + H2O = a 3'-end 3'-phospho-ribonucleotide-RNA + a 5'-end dephospho-ribonucleoside-RNA + H(+). Rnase which modulates cell survival under stress conditions. Released from the vacuole to the cytoplasm during stress to promote tRNA and rRNA cleavage and to activate separately a downstream pathway that promotes cell death. Involved in cell size, vacuolar morphology and growth at high temperatures and high salt concentration. The protein is Ribonuclease T2-like (RNY1) of Saccharomyces cerevisiae (strain ATCC 204508 / S288c) (Baker's yeast).